A 358-amino-acid polypeptide reads, in one-letter code: Zinc transporter ZIP1 (358 aa).

Over 1-7 (MDLLFAK) the chain is Extracellular. Residues 8–28 (IICIGIFLVVTTFGCFIPHLM) form a helical membrane-spanning segment. Topologically, residues 29–53 (GLYKEKENEEKNKRVKNILSNLNCF) are cytoplasmic. Residues 54 to 74 (GSGFIFSIIMFHLLPETIHII) form a helical membrane-spanning segment. Residues 75–91 (SDHGNIRIFNTSDSQMK) are Extracellular-facing. Residues 92 to 112 (ILYIFFFVFIGFCMQLGLEYV) form a helical membrane-spanning segment. At 113–186 (LPVDTNICCV…GKFLEILTLQ (74 aa)) the chain is on the cytoplasmic side. A helical membrane pass occupies residues 187 to 207 (SFFLTISLAIHSCIEGMIIGT). Residues 208-213 (STDVNY) lie on the Extracellular side of the membrane. The helical transmembrane segment at 214 to 234 (VFISSFCILLHKWIAGVTVSL) threads the bilayer. At 235 to 246 (SLNSNNMNKTLK) the chain is on the cytoplasmic side. A helical membrane pass occupies residues 247–267 (AILLLTFVFASPLGIVLGHMA). Residues 268–273 (KSAGQK) are Extracellular-facing. A helical transmembrane segment spans residues 274–294 (VTCLINAVSIGTLLFIGCEIL). Residues 295–310 (LNEIKQNISRKVRLCK) lie on the Cytoplasmic side of the membrane. Residues 311 to 331 (WLSFCFSCLIAFALISFTTSM) traverse the membrane as a helical segment. Over 332-358 (APHTHGDIDTHVHVHHHDHDHDHGHNH) the chain is Extracellular.

Belongs to the ZIP transporter (TC 2.A.5) family. Homodimer.

It localises to the plastid. The protein resides in the apicoplast. Its subcellular location is the cell membrane. The enzyme catalyses Zn(2+)(in) = Zn(2+)(out). It carries out the reaction Fe(2+)(in) = Fe(2+)(out). Transporter for the divalent zinc cation. Mediates the influx of zinc into cells from extracellular space. Can transport divalent iron ions. Does not transport manganese and cadmium cations. This is Zinc transporter ZIP1 from Plasmodium falciparum (isolate 3D7).